The following is a 184-amino-acid chain: Photosystem I assembly protein Ycf4 (184 aa).

Helical transmembrane passes span Asn21–Tyr43 and Ile58–Leu80.

The protein belongs to the Ycf4 family.

It is found in the plastid. It localises to the chloroplast thylakoid membrane. Functionally, seems to be required for the assembly of the photosystem I complex. The polypeptide is Photosystem I assembly protein Ycf4 (Calycanthus floridus var. glaucus (Eastern sweetshrub)).